We begin with the raw amino-acid sequence, 27 residues long: QAVLSETGGGDTASCDEYLYQELAYVK.

Glu-6 functions as the Nucleophile in the catalytic mechanism.

It carries out the reaction Endohydrolysis of (1-&gt;4)-beta-D-glucosidic linkages in cellulose, lichenin and cereal beta-D-glucans.. Its activity is regulated as follows. Activity is stimulated by zinc ions, potassium ions and DTT. Activity is inhibited by manganese and chloride ions. In terms of biological role, endoglucanase (EG) that cleaves the internal beta-1,4-glucosidic bonds in cellulose. This Fomes meliae (Fomitopsis meliae) protein is Endoglucanase gh5.